The primary structure comprises 714 residues: Calpain-1 catalytic subunit (714 aa).

The Calpain catalytic domain maps to 55–354 (LFRDEAFPPV…FTRLEICNLT (300 aa)). Ca(2+) contacts are provided by glutamine 109 and aspartate 114. Catalysis depends on residues cysteine 115, histidine 272, and asparagine 296. Ca(2+) contacts are provided by asparagine 316, aspartate 318, and aspartate 323. Position 354 is a phosphothreonine (threonine 354). The domain III stretch occupies residues 355-526 (PDALKSRTIR…KSAGTAELDD (172 aa)). The interval 527-542 (QIQANLPDEQVLSEEE) is linker. EF-hand domains follow at residues 541–576 (EEID…IISK), 585–618 (FSLE…NRIR), 615–650 (NRIR…AGFK), and 680–714 (VRLE…TMFA). Residues 543–713 (IDENFKALFR…LFKWLQLTMF (171 aa)) are domain IV. The Ca(2+) site is built by aspartate 598, aspartate 600, asparagine 602, lysine 604, glutamate 609, aspartate 628, aspartate 630, serine 632, serine 634, and glutamate 639.

It belongs to the peptidase C2 family. As to quaternary structure, forms a heterodimer with a small (regulatory) subunit CAPNS1. The cofactor is Ca(2+). Undergoes calcium-induced successive autoproteolytic cleavages that generate a membrane-bound 78 kDa active form and an intracellular 75 kDa active form. Calpastatin reduces with high efficiency the transition from 78 kDa to 75 kDa calpain forms.

It is found in the cytoplasm. Its subcellular location is the cell membrane. It catalyses the reaction Broad endopeptidase specificity.. Its activity is regulated as follows. Activated by micromolar concentrations of calcium and inhibited by calpastatin. Its function is as follows. Calcium-regulated non-lysosomal thiol-protease which catalyzes limited proteolysis of substrates involved in cytoskeletal remodeling and signal transduction. Proteolytically cleaves CTBP1. Cleaves and activates caspase-7 (CASP7). This chain is Calpain-1 catalytic subunit, found in Pongo abelii (Sumatran orangutan).